Here is a 366-residue protein sequence, read N- to C-terminus: Dof zinc finger protein DOF1.3 (366 aa).

Residues 22–103 (DPYSSSSHVL…KTTELKKPDK (82 aa)) form a disordered region. Composition is skewed to low complexity over residues 25 to 45 (SSSSHVLPDSSSSSSSSSLSL) and 56 to 69 (TDNTSLKLSSNLNN). 2 stretches are compositionally biased toward basic and acidic residues: residues 70–83 (ESKETSENSDDQHS) and 91–103 (EEEKTTELKKPDK). The segment at 105–159 (LPCPRCNSADTKFCYYNNYNVNQPRHFCRKCQRYWTAGGSMRIVPVGSGRRKNKG) adopts a Dof-type zinc-finger fold. 4 residues coordinate Zn(2+): cysteine 107, cysteine 110, cysteine 132, and cysteine 135.

It localises to the nucleus. Functionally, transcription factor that binds specifically to a 5'-AA[AG]G-3' consensus core sequence. The chain is Dof zinc finger protein DOF1.3 (DOF1.3) from Arabidopsis thaliana (Mouse-ear cress).